A 427-amino-acid chain; its full sequence is Serine hydroxymethyltransferase (427 aa).

120 to 122 (GHI) contacts (6S)-5,6,7,8-tetrahydrofolate. At lysine 226 the chain carries N6-(pyridoxal phosphate)lysine.

It belongs to the SHMT family. Homodimer. It depends on pyridoxal 5'-phosphate as a cofactor.

It is found in the cytoplasm. It functions in the pathway amino-acid biosynthesis; glycine biosynthesis; glycine from L-serine: step 1/1. Functionally, catalyzes the reversible interconversion of serine and glycine with a modified folate serving as the one-carbon carrier. Also exhibits a pteridine-independent aldolase activity toward beta-hydroxyamino acids, producing glycine and aldehydes, via a retro-aldol mechanism. In Pyrococcus abyssi (strain GE5 / Orsay), this protein is Serine hydroxymethyltransferase.